Consider the following 123-residue polypeptide: Histone H2B.1, embryonic (123 aa).

Residues 1–32 (MAPTGQVAKKGSKKAVKPPRASGGKKRHRKRK) are disordered. Basic residues predominate over residues 10-32 (KGSKKAVKPPRASGGKKRHRKRK). A glycan (O-linked (GlcNAc) serine) is linked at Ser110. Lys118 is covalently cross-linked (Glycyl lysine isopeptide (Lys-Gly) (interchain with G-Cter in ubiquitin)).

It belongs to the histone H2B family. In terms of assembly, the nucleosome is a histone octamer containing two molecules each of H2A, H2B, H3 and H4 assembled in one H3-H4 heterotetramer and two H2A-H2B heterodimers. The octamer wraps approximately 147 bp of DNA. Post-translationally, monoubiquitination of Lys-118 gives a specific tag for epigenetic transcriptional activation and is also prerequisite for histone H3 'Lys-4' and 'Lys-79' methylation. GlcNAcylation at Ser-110 promotes monoubiquitination of Lys-118. It fluctuates in response to extracellular glucose, and associates with transcribed genes.

The protein localises to the nucleus. It is found in the chromosome. Functionally, core component of nucleosome. Nucleosomes wrap and compact DNA into chromatin, limiting DNA accessibility to the cellular machineries which require DNA as a template. Histones thereby play a central role in transcription regulation, DNA repair, DNA replication and chromosomal stability. DNA accessibility is regulated via a complex set of post-translational modifications of histones, also called histone code, and nucleosome remodeling. This chain is Histone H2B.1, embryonic, found in Psammechinus miliaris (Green sea urchin).